The primary structure comprises 195 residues: Imidazoleglycerol-phosphate dehydratase (195 aa).

Belongs to the imidazoleglycerol-phosphate dehydratase family.

It is found in the cytoplasm. The catalysed reaction is D-erythro-1-(imidazol-4-yl)glycerol 3-phosphate = 3-(imidazol-4-yl)-2-oxopropyl phosphate + H2O. The protein operates within amino-acid biosynthesis; L-histidine biosynthesis; L-histidine from 5-phospho-alpha-D-ribose 1-diphosphate: step 6/9. The chain is Imidazoleglycerol-phosphate dehydratase from Thermotoga neapolitana (strain ATCC 49049 / DSM 4359 / NBRC 107923 / NS-E).